The primary structure comprises 162 residues: Interleukin-15 (162 aa).

An N-terminal signal peptide occupies residues 1 to 29 (MRISKPHLRSISIQCYLCLLLNSHFLTEA). Residues 30–48 (GIHVFILGCFSAGLPKTEA) constitute a propeptide that is removed on maturation. 2 cysteine pairs are disulfide-bonded: C83–C133 and C90–C136. The N-linked (GlcNAc...) asparagine glycan is linked to N127.

It belongs to the IL-15/IL-21 family. Most abundant in placenta and skeletal muscle. It is also detected in the heart, lung, liver and kidney. IL15-S21AA is preferentially expressed in tissues such as testis and thymus.

It is found in the secreted. Its subcellular location is the cytoplasm. The protein localises to the nucleus. Functionally, cytokine that plays a major role in the development of inflammatory and protective immune responses to microbial invaders and parasites by modulating immune cells of both the innate and adaptive immune systems. Stimulates the proliferation of natural killer cells, T-cells and B-cells and promotes the secretion of several cytokines. In monocytes, induces the production of IL8 and monocyte chemotactic protein 1/CCL2, two chemokines that attract neutrophils and monocytes respectively to sites of infection. Unlike most cytokines, which are secreted in soluble form, IL15 is expressed in association with its high affinity IL15RA on the surface of IL15-producing cells and delivers signals to target cells that express IL2RB and IL2RG receptor subunits. Binding to its receptor triggers the phosphorylation of JAK1 and JAK3 and the recruitment and subsequent phosphorylation of signal transducer and activator of transcription-3/STAT3 and STAT5. In mast cells, induces the rapid tyrosine phosphorylation of STAT6 and thereby controls mast cell survival and release of cytokines such as IL4. The sequence is that of Interleukin-15 (IL15) from Homo sapiens (Human).